The chain runs to 121 residues: Large ribosomal subunit protein bL12 (121 aa).

Belongs to the bacterial ribosomal protein bL12 family. In terms of assembly, homodimer. Part of the ribosomal stalk of the 50S ribosomal subunit. Forms a multimeric L10(L12)X complex, where L10 forms an elongated spine to which 2 to 4 L12 dimers bind in a sequential fashion. Binds GTP-bound translation factors.

Its function is as follows. Forms part of the ribosomal stalk which helps the ribosome interact with GTP-bound translation factors. Is thus essential for accurate translation. The sequence is that of Large ribosomal subunit protein bL12 from Shewanella baltica (strain OS223).